Here is a 127-residue protein sequence, read N- to C-terminus: uncharacterized protein (127 aa).

An N-terminal signal peptide occupies residues 1 to 16; that stretch reads MLKKIIFGITISLTTG. Cys-17 carries N-palmitoyl cysteine lipidation. A lipid anchor (S-diacylglycerol cysteine) is attached at Cys-17. The stretch at 56 to 101 forms a coiled coil; that stretch reads EVREEIQKYRVEIVDINKKKRELYNRLSKEAQSFLAEQQKYKQKLS. Residues 102 to 127 form a disordered region; the sequence is IPKLLIENDPKNNTANSKDNNDKDMK.

It localises to the cell membrane. This is an uncharacterized protein from Rickettsia prowazekii (strain Madrid E).